Reading from the N-terminus, the 118-residue chain is Succinate dehydrogenase assembly factor 1, mitochondrial (118 aa).

Residues 14 to 16 (LYR) carry the LYR motif 1; required for interaction with HSC20 motif. Residues 53-55 (LYR) carry the LYR motif 2; not required for interaction with HSC20 motif. The interval 53–65 (LYRRGRRQLQLLR) is interaction with SDHB. The disordered stretch occupies residues 68–118 (HATAMGTFVRPRGPAEEPGDATAPGTRLDDGGAPKNSCEDTGARETRSDGR). Positions 94 to 118 (RLDDGGAPKNSCEDTGARETRSDGR) are enriched in basic and acidic residues.

The protein belongs to the complex I LYR family. SDHAF1 subfamily. In terms of assembly, interacts with SDHB within an SDHA-SDHB subcomplex. Also interacts with the iron-sulfur transfer complex formed by HSC20, HSPA9 and ISCU through direct binding to HSC20. Binding of SDHAF1 to SDHB precedes and is necessary for recruitment of the iron-sulfur transfer complex by SDHAF1.

Its subcellular location is the mitochondrion matrix. Functionally, plays an essential role in the assembly of succinate dehydrogenase (SDH), an enzyme complex (also referred to as respiratory complex II) that is a component of both the tricarboxylic acid (TCA) cycle and the mitochondrial electron transport chain, and which couples the oxidation of succinate to fumarate with the reduction of ubiquinone (coenzyme Q) to ubiquinol. Promotes maturation of the iron-sulfur protein subunit Sdhb of the SDH catalytic dimer, protecting it from the deleterious effects of oxidants. May act together with SDHAF3. Contributes to iron-sulfur cluster incorporation into SDHB by binding to SDHB and recruiting the iron-sulfur transfer complex formed by HSC20, HSPA9 and ISCU through direct binding to HSC20. This chain is Succinate dehydrogenase assembly factor 1, mitochondrial, found in Mus musculus (Mouse).